The chain runs to 147 residues: Probable inactive ribonuclease-like protein 12 (147 aa).

The first 20 residues, M1 to D20, serve as a signal peptide directing secretion.

It belongs to the pancreatic ribonuclease family.

The protein resides in the secreted. Its function is as follows. Does not exhibit any ribonuclease activity. In Homo sapiens (Human), this protein is Probable inactive ribonuclease-like protein 12 (RNASE12).